A 169-amino-acid polypeptide reads, in one-letter code: Peptide deformylase (169 aa).

Residues cysteine 91 and histidine 133 each coordinate Fe cation. Glutamate 134 is an active-site residue. Fe cation is bound at residue histidine 137.

It belongs to the polypeptide deformylase family. Requires Fe(2+) as cofactor.

The enzyme catalyses N-terminal N-formyl-L-methionyl-[peptide] + H2O = N-terminal L-methionyl-[peptide] + formate. In terms of biological role, removes the formyl group from the N-terminal Met of newly synthesized proteins. Requires at least a dipeptide for an efficient rate of reaction. N-terminal L-methionine is a prerequisite for activity but the enzyme has broad specificity at other positions. This chain is Peptide deformylase, found in Hydrogenovibrio crunogenus (strain DSM 25203 / XCL-2) (Thiomicrospira crunogena).